The primary structure comprises 292 residues: Hypoxia responsive morphology factor A (292 aa).

The short motif at 48 to 70 is the Bipartite nuclear localization signal element; the sequence is RRNGRRRNLEYVAQHRRKIARKI. Residues 156-186 form an RNA recognition motif (RRM)-like domain region; sequence GKEHYSLHLSTLPAIRNAFGDVIFDAIERSP.

This sequence belongs to the hrmA family.

The protein localises to the nucleus. Hypoxia responsive morphology factor that modulates the expression of the subtelomeric hrmA-associated cluster (HAC) containing genes that alter the hyphal surface (such as reduced total chitin or increased beta-glucan exposure) and perturb inter-hyphal interactions within the developing biofilms, resulting in a loss of vertically aligned polarized growing filaments. Consequently, this hypoxia-typic morphotype (called H-MORPH) with altered biofilm architecture leads to increased hypoxia fitness, increased host inflammation, rapid disease progression, and mortality in a murine model of invasive aspergillosis. The chain is Hypoxia responsive morphology factor A from Aspergillus fumigatus (strain CBS 144.89 / FGSC A1163 / CEA10) (Neosartorya fumigata).